Consider the following 421-residue polypeptide: Histidine--tRNA ligase (421 aa).

This sequence belongs to the class-II aminoacyl-tRNA synthetase family. In terms of assembly, homodimer.

The protein resides in the cytoplasm. It carries out the reaction tRNA(His) + L-histidine + ATP = L-histidyl-tRNA(His) + AMP + diphosphate + H(+). The chain is Histidine--tRNA ligase from Coxiella burnetii (strain CbuK_Q154) (Coxiella burnetii (strain Q154)).